A 1486-amino-acid polypeptide reads, in one-letter code: Chromosome partition protein MukB (1486 aa).

Residue 34–41 (GGNGAGKS) participates in ATP binding. 3 coiled-coil regions span residues 326–418 (LEAD…QYNQ), 444–480 (LETF…QAYQ), and 509–603 (RHLA…RAPV). A flexible hinge region spans residues 666–783 (PGGSEDQRLN…EVPLFGRAAR (118 aa)). Coiled coils occupy residues 835–923 (EAEI…AKLE), 977–1115 (EMLS…TAKA), and 1209–1266 (VEAI…QNVS).

It belongs to the SMC family. MukB subfamily. In terms of assembly, homodimerization via its hinge domain. Binds to DNA via its C-terminal region. Interacts, and probably forms a ternary complex, with MukE and MukF via its C-terminal region. The complex formation is stimulated by calcium or magnesium. Interacts with tubulin-related protein FtsZ.

The protein resides in the cytoplasm. It localises to the nucleoid. Plays a central role in chromosome condensation, segregation and cell cycle progression. Functions as a homodimer, which is essential for chromosome partition. Involved in negative DNA supercoiling in vivo, and by this means organize and compact chromosomes. May achieve or facilitate chromosome segregation by condensation DNA from both sides of a centrally located replisome during cell division. In Escherichia coli (strain ATCC 8739 / DSM 1576 / NBRC 3972 / NCIMB 8545 / WDCM 00012 / Crooks), this protein is Chromosome partition protein MukB.